The primary structure comprises 119 residues: Ribosome-binding factor A (119 aa).

The protein belongs to the RbfA family. In terms of assembly, monomer. Binds 30S ribosomal subunits, but not 50S ribosomal subunits or 70S ribosomes.

The protein localises to the cytoplasm. One of several proteins that assist in the late maturation steps of the functional core of the 30S ribosomal subunit. Associates with free 30S ribosomal subunits (but not with 30S subunits that are part of 70S ribosomes or polysomes). Required for efficient processing of 16S rRNA. May interact with the 5'-terminal helix region of 16S rRNA. The polypeptide is Ribosome-binding factor A (Pseudothermotoga lettingae (strain ATCC BAA-301 / DSM 14385 / NBRC 107922 / TMO) (Thermotoga lettingae)).